Here is a 2032-residue protein sequence, read N- to C-terminus: MMSDDMLDENDENFACQDVDEIIIYVPEFAGYREVNIDTAVSVCPTPIQQARRESSCRNLEMRRRFEKLRREKKEEKKLLADDEKDFDEDDDVFEDGEGLQMRTFQPNASIRDENGSMPSLLPRTAPIKKTRKHRRRRSGSFTGGVYPRKGHRNRSLLGHAIPPPNVHSADWRDMLAITDNKDDKLMKTLGVTRYLQSKGGDQVPPTSTTTGGAGGDGNAVPTTSQAQAQTFNSGRQTTGMSSGDRLNEDVSATANSAQLVLPTPLFNQMRFTESNMSLNRHNWVRETFTRRECSRFIASSRDLHKCGCGRTRDAHRNIPELTSEFLRQKRSVAALEQQRSISNVNDDINTQNMYTKRGANEKWSLRKHTVSLATNAFGQVEFQGGPHPYKAQYVRVNFDTEPAYIMSLFEHVWQISPPRLIITVHGGTSNFDLQPKLARVFRKGLLKAASTTGAWIITSGCDTGVVKHVAAALEGAQSAQRNKIVCIGIAPWGLLKKREDFIGQDKTVPYYPSSSKGRFTGLNNRHSYFLLVDNGTVGRYGAEVILRKRLEMYISQKQKIFGGTRSVPVVCVVLEGGSCTIRSVLDYVTNVPRVPVVVCDGSGRAADLLAFAHQNVTEDGLLPDDIRRQVLLLVETTFGCSEAAAHRLLHELTVCAQHKNLLTIFRLGEQGEHDVDHAILTALLKGQNLSAADQLALALAWNRVDIARSDVFAMGHEWPQAALHNAMMEALIHDRVDFVRLLLEQGINMQKFLTISRLDELYNTDKGPPNTLFYIVRDVVRVRQGYRFKLPDIGLVIEKLMGNSYQCSYTTSEFRDKYKQRMKRVKHAQKKAMGVFSSRPSRTGSGIASRQSTEGMGGVGGGSSVAGVFGNSFGNQDPPLDPHVNRSALSGSRALSNHILWRSAFRGNFPANPMRPPNLGDSRDCGSEFDEELSLTSASDGSQTEPDFRYPYSELMIWAVLTKRQDMAMCMWQHGEEAMAKALVACRLYKSLATEAAEDYLEVEICEELKKYAEEFRILSLELLDHCYHVDDAQTLQLLTYELSNWSNETCLALAVIVNNKHFLAHPCCQILLADLWHGGLRMRTHSNIKVVLGLICPPFIQMLEFKTREELLNQPQTAAEHQNDMNYSSSSSSSSSSSSSSSSSDSSSFEDDDDENNAHNHDQKRTRKTSQGSAQSLNITSLFHSRRRKAKKNEKCDRETDASACEAGNRQIQNGGLTAEYGTFGESNGVSPPPPYMRANSRSRYNNRSDMSKTSSVIFGSDPNLSKLQKSNITSTDRPNPMEQFQGTRKIKMRRRFYEFYSAPISTFWSWTISFILFITFFTYTLLVKTPPRPTVIEYILIAYVAAFGLEQVRKIIMSDAKPFYEKIRTYVCSFWNCVTILAIIFYIVGFFMRCFGSVAYGRVILACDSVLWTMKLLDYMSVHPKLGPYVTMAGKMIQNMSYIIVMLVVTLLSFGLARQSITYPDETWHWILVRNIFLKPYFMLYGEVYADEIDTCGDEAWDQHLENGGPVILGNGTTGLSCVPGYWIPPLLMTFFLLIANILLMSMLIAIFNHIFDATDEMSQQIWLFQRYKQVMEYESTPFLPPPLTPLYHGVLILQFVRTRLSCSKSQERNPMFDFSLKLFLDNDQIEKLHDFEEDCMEDLARQKLNEKNTSNEQRILRADIRTDQILNRLIDLQAKESMGRDVINDVESRLASVEKAQNEILECVRALLNQNNAPTAIGRCFSPSPDPLVETANGTPGPLLLKLPGTDPILEEKDHDSGENSNSLPPGRIRRNRTATICGGYVSEERNMMLLSPKPSDVSGIPQQRLMSVTSMDPLPLPLAKLSTMSIRRRHEEYTSITDSIAIRHPERRIRNNRSNSSEHDESAVDSEGGGNVTSSPRKRSTRDLRMTPSSQVEESTSRDQIFEIDHPEHEEDEAQADCELTDVITEEEDEEEDDEEDDSHERHHIHPRRKSSRQNRQPSHTLETDLSEGEEVDPLDVLKMKELPIIHQILNEEEQAGAPHSTPVIASPSSSRADLTSQKCSDV.

The segment covering 129–139 (KKTRKHRRRRS) has biased composition (basic residues). Disordered stretches follow at residues 129–162 (KKTR…GHAI), 197–223 (QSKG…AVPT), 831–860 (KKAM…MGGV), 912–945 (ANPM…GSQT), and 1120–1211 (AAEH…EAGN). Polar residues-rich tracts occupy residues 839 to 855 (SRPS…QSTE), 935 to 945 (SLTSASDGSQT), and 1120 to 1129 (AAEHQNDMNY). Residues 1130–1149 (SSSSSSSSSSSSSSSSSDSS) are compositionally biased toward low complexity. Polar residues predominate over residues 1171 to 1185 (TSQGSAQSLNITSLF). 5 consecutive transmembrane segments (helical) span residues 1310-1330 (FWSW…TLLV), 1332-1352 (TPPR…AFGL), 1374-1394 (VCSF…VGFF), 1439-1459 (MIQN…SFGL), and 1535-1555 (LMTF…IAIF). 4 disordered regions span residues 1753–1779 (GTDP…RIRR), 1853–1909 (HPER…SRDQ), 1935–1982 (EEED…EEVD), and 1999–2032 (LNEE…CSDV). Acidic residues predominate over residues 1935–1947 (EEEDEEEDDEEDD). A compositionally biased stretch (basic residues) spans 1951-1962 (RHHIHPRRKSSR). Residues 2016-2032 (SPSSSRADLTSQKCSDV) show a composition bias toward polar residues.

It belongs to the transient receptor (TC 1.A.4) family. LTrpC subfamily. As to expression, gonads.

It is found in the membrane. In terms of biological role, required for initiation and continuation of postembryonic mitotic cell divisions of gonadal cells Z1 and Z4. Zygotic expression is necessary for hermaphrodite fertility. May be a cation channel. The protein is Transient receptor potential channel (gon-2) of Caenorhabditis elegans.